The primary structure comprises 510 residues: MKNADILVLDFGSQYTQLIARRLREQGVYAELMPFNVSIEAIKAKNPKGIILSGGPASVYAKDAYFCDEGVFTLGLPVLGICYGMQLLAHKNGADVAPAGHKEYGKANLNIVKKCDFFKGVPDTSVVWMSHSDKVNELPQGFEVLANSENSEFCVFANLDKKLYALQFHPEVAHSEFGDTMLKNFAKICGCESTWNMGSFAKKEVQAIREKVGNDKVLCAVSGGVDSSVVAALLAHAIPDNLIVVFVDNGLLRTNEAKQVEEMFKLKLGVNLISIDASELFLSRLKGVRDPEKKRKIIGETFIEVFDKEAKKHSNVKYLAQGTLYTDVIESSVVGSSKTIKSHHNVGGLPEWMEFELIEPLREIFKDEVRRLGLELGLSRDIVYRHPFPGPGLAIRIMGEVNTSSLELLRKADVILREELKSSGWYDKTWQAFCVLLNVNSVGVMGDNRTYENAVCLRVVDASDGMTASFSRLPYDLLENCSRRIINEVDGINRVVYDISSKPPATIEWE.

One can recognise a Glutamine amidotransferase type-1 domain in the interval 5–194 (DILVLDFGSQ…FAKICGCEST (190 aa)). Cysteine 82 functions as the Nucleophile in the catalytic mechanism. Catalysis depends on residues histidine 169 and glutamate 171. The GMPS ATP-PPase domain maps to 195–385 (WNMGSFAKKE…LGLSRDIVYR (191 aa)). An ATP-binding site is contributed by 222-228 (SGGVDSS).

As to quaternary structure, homodimer.

It carries out the reaction XMP + L-glutamine + ATP + H2O = GMP + L-glutamate + AMP + diphosphate + 2 H(+). The protein operates within purine metabolism; GMP biosynthesis; GMP from XMP (L-Gln route): step 1/1. Its function is as follows. Catalyzes the synthesis of GMP from XMP. The sequence is that of GMP synthase [glutamine-hydrolyzing] from Campylobacter fetus subsp. fetus (strain 82-40).